The primary structure comprises 442 residues: Probable glycine dehydrogenase (decarboxylating) subunit 1 (442 aa).

It belongs to the GcvP family. N-terminal subunit subfamily. As to quaternary structure, the glycine cleavage system is composed of four proteins: P, T, L and H. In this organism, the P 'protein' is a heterodimer of two subunits.

The enzyme catalyses N(6)-[(R)-lipoyl]-L-lysyl-[glycine-cleavage complex H protein] + glycine + H(+) = N(6)-[(R)-S(8)-aminomethyldihydrolipoyl]-L-lysyl-[glycine-cleavage complex H protein] + CO2. In terms of biological role, the glycine cleavage system catalyzes the degradation of glycine. The P protein binds the alpha-amino group of glycine through its pyridoxal phosphate cofactor; CO(2) is released and the remaining methylamine moiety is then transferred to the lipoamide cofactor of the H protein. The protein is Probable glycine dehydrogenase (decarboxylating) subunit 1 of Geotalea uraniireducens (strain Rf4) (Geobacter uraniireducens).